The chain runs to 256 residues: Trans-aconitate 2-methyltransferase (256 aa).

This sequence belongs to the methyltransferase superfamily. Tam family.

The protein localises to the cytoplasm. It catalyses the reaction trans-aconitate + S-adenosyl-L-methionine = (E)-3-(methoxycarbonyl)pent-2-enedioate + S-adenosyl-L-homocysteine. Functionally, catalyzes the S-adenosylmethionine monomethyl esterification of trans-aconitate. This Rhizobium rhizogenes (strain K84 / ATCC BAA-868) (Agrobacterium radiobacter) protein is Trans-aconitate 2-methyltransferase.